Consider the following 379-residue polypeptide: tRNA-specific 2-thiouridylase MnmA (379 aa).

ATP is bound by residues 23–30 (AMSGGVDS) and Leu-49. The active-site Nucleophile is the Cys-117. A disulfide bond links Cys-117 and Cys-214. Gly-141 serves as a coordination point for ATP. Residues 163–165 (RDQ) form an interaction with tRNA region. The active-site Cysteine persulfide intermediate is the Cys-214.

The protein belongs to the MnmA/TRMU family.

The protein localises to the cytoplasm. The catalysed reaction is S-sulfanyl-L-cysteinyl-[protein] + uridine(34) in tRNA + AH2 + ATP = 2-thiouridine(34) in tRNA + L-cysteinyl-[protein] + A + AMP + diphosphate + H(+). Functionally, catalyzes the 2-thiolation of uridine at the wobble position (U34) of tRNA, leading to the formation of s(2)U34. This Cereibacter sphaeroides (strain ATCC 17023 / DSM 158 / JCM 6121 / CCUG 31486 / LMG 2827 / NBRC 12203 / NCIMB 8253 / ATH 2.4.1.) (Rhodobacter sphaeroides) protein is tRNA-specific 2-thiouridylase MnmA.